A 177-amino-acid chain; its full sequence is Large ribosomal subunit protein uL6 (177 aa).

The protein belongs to the universal ribosomal protein uL6 family. In terms of assembly, part of the 50S ribosomal subunit.

This protein binds to the 23S rRNA, and is important in its secondary structure. It is located near the subunit interface in the base of the L7/L12 stalk, and near the tRNA binding site of the peptidyltransferase center. This is Large ribosomal subunit protein uL6 from Mannheimia succiniciproducens (strain KCTC 0769BP / MBEL55E).